Here is a 239-residue protein sequence, read N- to C-terminus: Putative CCR4-associated factor 1 homolog 8 (239 aa).

D17, E19, D133, and N204 together coordinate a divalent metal cation.

This sequence belongs to the CAF1 family. In terms of assembly, component of the CCR4-NOT complex, at least composed of CRR4 and CAF1 proteins. Requires a divalent metal cation as cofactor.

It is found in the nucleus. It localises to the cytoplasm. The enzyme catalyses Exonucleolytic cleavage of poly(A) to 5'-AMP.. In terms of biological role, ubiquitous transcription factor required for a diverse set of processes. It is a component of the CCR4 complex involved in the control of gene expression. This Arabidopsis thaliana (Mouse-ear cress) protein is Putative CCR4-associated factor 1 homolog 8 (CAF1-8).